Reading from the N-terminus, the 274-residue chain is Ribosomal RNA small subunit methyltransferase A (274 aa).

Residues Asn-20, Leu-22, Gly-47, Glu-68, Asp-90, and Asn-110 each contribute to the S-adenosyl-L-methionine site.

This sequence belongs to the class I-like SAM-binding methyltransferase superfamily. rRNA adenine N(6)-methyltransferase family. RsmA subfamily.

Its subcellular location is the cytoplasm. It carries out the reaction adenosine(1518)/adenosine(1519) in 16S rRNA + 4 S-adenosyl-L-methionine = N(6)-dimethyladenosine(1518)/N(6)-dimethyladenosine(1519) in 16S rRNA + 4 S-adenosyl-L-homocysteine + 4 H(+). In terms of biological role, specifically dimethylates two adjacent adenosines (A1518 and A1519) in the loop of a conserved hairpin near the 3'-end of 16S rRNA in the 30S particle. May play a critical role in biogenesis of 30S subunits. This is Ribosomal RNA small subunit methyltransferase A from Chlorobaculum parvum (strain DSM 263 / NCIMB 8327) (Chlorobium vibrioforme subsp. thiosulfatophilum).